The chain runs to 287 residues: Iodotyrosine deiodinase (287 aa).

A helical transmembrane segment spans residues 15–34 (HWPSLFITLALIWIVKRLFF). Residues 96–100 (RRSIR), Ser-125, and 125–126 (SG) each bind FMN. 3,5-diiodo-L-tyrosine contacts are provided by Ala-127, Glu-154, Tyr-158, and Lys-179. The 3-iodo-L-tyrosine site is built by Ala-127, Glu-154, Tyr-158, and Lys-179. FMN contacts are provided by residues 235–237 (VTT) and Arg-277.

The protein belongs to the nitroreductase family. As to quaternary structure, homodimer. FMN is required as a cofactor. In terms of tissue distribution, expressed in spermatocytes.

Its subcellular location is the cell membrane. It carries out the reaction 2 iodide + L-tyrosine + 2 NADP(+) = 3,5-diiodo-L-tyrosine + 2 NADPH + H(+). It catalyses the reaction iodide + L-tyrosine + NADP(+) = 3-iodo-L-tyrosine + NADPH. The enzyme catalyses 3-iodo-L-tyrosine + iodide + NADP(+) = 3,5-diiodo-L-tyrosine + NADPH + H(+). The catalysed reaction is L-tyrosine + chloride + NADP(+) = 3-chloro-L-tyrosine + NADPH. It carries out the reaction bromide + L-tyrosine + NADP(+) = 3-bromo-L-tyrosine + NADPH. Catalyzes the dehalogenation of halotyrosines such as 3-bromo-L-tyrosine, 3-chloro-L-tyrosine, 3-iodo-L-tyrosine and 3,5-diiodo-L-tyrosine. Activity towards 3-fluoro-L-tyrosine is weak. Important for male and female fertility. May be involved in maintaining the viability of sperm, both during development in the testes and storage in the female spermatheca. This is Iodotyrosine deiodinase from Drosophila melanogaster (Fruit fly).